A 417-amino-acid chain; its full sequence is Gamma-glutamyl phosphate reductase (417 aa).

The protein belongs to the gamma-glutamyl phosphate reductase family.

The protein localises to the cytoplasm. It catalyses the reaction L-glutamate 5-semialdehyde + phosphate + NADP(+) = L-glutamyl 5-phosphate + NADPH + H(+). Its pathway is amino-acid biosynthesis; L-proline biosynthesis; L-glutamate 5-semialdehyde from L-glutamate: step 2/2. Catalyzes the NADPH-dependent reduction of L-glutamate 5-phosphate into L-glutamate 5-semialdehyde and phosphate. The product spontaneously undergoes cyclization to form 1-pyrroline-5-carboxylate. This chain is Gamma-glutamyl phosphate reductase, found in Heliobacterium modesticaldum (strain ATCC 51547 / Ice1).